A 293-amino-acid chain; its full sequence is Urease accessory protein UreD (293 aa).

This sequence belongs to the UreD family. UreD, UreF and UreG form a complex that acts as a GTP-hydrolysis-dependent molecular chaperone, activating the urease apoprotein by helping to assemble the nickel containing metallocenter of UreC. The UreE protein probably delivers the nickel.

It localises to the cytoplasm. Required for maturation of urease via the functional incorporation of the urease nickel metallocenter. This is Urease accessory protein UreD from Cupriavidus metallidurans (strain ATCC 43123 / DSM 2839 / NBRC 102507 / CH34) (Ralstonia metallidurans).